Consider the following 60-residue polypeptide: Large ribosomal subunit protein bL32 (60 aa).

The segment at 1-60 (MAVQQNKKSRSARDMRRSHDALSENALSVEKTTGEVHLRHHVSPEGVYRGRKVVDKGADE) is disordered. Residues 11 to 22 (SARDMRRSHDAL) are compositionally biased toward basic and acidic residues.

This sequence belongs to the bacterial ribosomal protein bL32 family.

This Pseudomonas putida (strain ATCC 700007 / DSM 6899 / JCM 31910 / BCRC 17059 / LMG 24140 / F1) protein is Large ribosomal subunit protein bL32.